The chain runs to 1115 residues: Neural cell adhesion molecule 1 (1115 aa).

The signal sequence occupies residues 1–19 (MLRTKDLIWTLFFLGTAVS). Ig-like C2-type domains are found at residues 20–111 (LQVD…ATVN), 116–205 (QKLM…KDIQ), 212–302 (PTVQ…ASIH), 309–402 (PKIT…MYLE), and 407–492 (PKLQ…ESLE). Residues 20-711 (LQVDIVPSQG…NGSPTAGLST (692 aa)) are Extracellular-facing. Intrachain disulfides connect cysteine 41/cysteine 96 and cysteine 139/cysteine 189. Residues 152 to 156 (KHKGR) and 161 to 165 (KKDVR) contribute to the heparin site. The N-linked (GlcNAc...) asparagine; partial glycan is linked to asparagine 222. Cysteines 235 and 288 form a disulfide. Residues asparagine 316, asparagine 348, asparagine 424, asparagine 450, and asparagine 479 are each glycosylated (N-linked (GlcNAc...) asparagine). Cysteine 330 and cysteine 386 are joined by a disulfide. Cysteines 427 and 480 form a disulfide. Fibronectin type-III domains follow at residues 500 to 599 (TPSS…TQPV) and 601 to 696 (EPSA…SAQP). A lipid anchor (GPI-anchor amidated serine) is attached at threonine 706. Residues 712–729 (GAIVGILIVIFVLLLVVM) form a helical membrane-spanning segment. At 730-1115 (DITCYFLNKC…TQTKENESKA (386 aa)) the chain is on the cytoplasmic side. Disordered stretches follow at residues 756–809 (GAKG…TEPE), 839–912 (FATA…SASN), and 924–1115 (VLSP…ESKA). Residues 758-799 (KGKDMEEGKAAFSKDESKEPIVEVRTEEERTPNHDGGKHTEP) show a composition bias toward basic and acidic residues. 2 positions are modified to phosphoserine: serine 770 and serine 774. 3 stretches are compositionally biased toward low complexity: residues 800 to 809 (NETTPLTEPE), 845 to 856 (SPTSETTTLTSS), and 876 to 896 (TPSKGVTASSSSPASAPKVAP). Phosphoserine occurs at positions 887 and 890. Polar residues-rich tracts occupy residues 902 to 912 (DTPTSAPSASN) and 926 to 935 (SPSTPASAGE). Serine 926 is modified (phosphoserine). The residue at position 929 (threonine 929) is a Phosphothreonine. Composition is skewed to low complexity over residues 936 to 974 (TSKAPPASKASPAPTPTPAGAASPLAAVAAPATDAPQAK) and 999 to 1012 (AATAPASPKSKAAT). Phosphoserine is present on residues serine 946 and serine 958. Threonine 1001 carries the phosphothreonine modification. Serine 1005 carries the phosphoserine modification. 2 stretches are compositionally biased toward basic and acidic residues: residues 1019–1037 (EDLKMDEGNFKTPDIDLAK) and 1074–1091 (KTEKGPVETKSEPPESEA). At threonine 1030 the chain carries Phosphothreonine.

In terms of assembly, interacts with MDK. Found in a complex with SLC39A6, SLC39A10 and with NCAM1; this complex controls NCAM1 phosphorylation and integration into focal adhesion complexes during epithelial-tomesenchymal transition. Interacts with synaptic plasticity regulator PANTS. In terms of processing, polysialylated by ST8SIA2 and ST8SIA4. Polysialylation modulates cell interactions by confering both attractive and repulsive properties that are highly regulated by ST8SIA2 and ST8SIA4. Polysialylation is formed on a-2,3-linked sialic acid of core glycans.

The protein localises to the cell membrane. This protein is a cell adhesion molecule involved in neuron-neuron adhesion, neurite fasciculation, outgrowth of neurites, etc. In Mus musculus (Mouse), this protein is Neural cell adhesion molecule 1.